Here is a 229-residue protein sequence, read N- to C-terminus: Large ribosomal subunit protein uL1 (229 aa).

This sequence belongs to the universal ribosomal protein uL1 family. In terms of assembly, part of the 50S ribosomal subunit.

Its function is as follows. Binds directly to 23S rRNA. The L1 stalk is quite mobile in the ribosome, and is involved in E site tRNA release. Functionally, protein L1 is also a translational repressor protein, it controls the translation of the L11 operon by binding to its mRNA. In Streptococcus equi subsp. equi (strain 4047), this protein is Large ribosomal subunit protein uL1.